The sequence spans 105 residues: Thioredoxin (105 aa).

Residues 2-105 form the Thioredoxin domain; sequence VKQIESKYAF…KLEATINELI (104 aa). Lys-3 bears the N6-acetyllysine mark. At Lys-8 the chain carries N6-succinyllysine. Active-site nucleophile residues include Cys-32 and Cys-35. Residues Cys-32 and Cys-35 are joined by a disulfide bond. Lys-39 is subject to N6-acetyllysine. An S-nitrosocysteine mark is found at Cys-62 and Cys-69. Cys-73 carries the S-nitrosocysteine; alternate modification. Lys-94 is subject to N6-acetyllysine; alternate. The residue at position 94 (Lys-94) is an N6-succinyllysine; alternate.

This sequence belongs to the thioredoxin family. Homodimer; disulfide-linked. Interacts with TXNIP through the redox-active site. Interacts with MAP3K5 and CASP3. Interacts with APEX1; the interaction stimulates the FOS/JUN AP-1 DNA-binding activity in a redox-dependent manner. Post-translationally, in the fully reduced protein, both Cys-69 and Cys-73 are nitrosylated in response to nitric oxide (NO). When two disulfide bonds are present in the protein, only Cys-73 is nitrosylated. Cys-73 can serve as donor for nitrosylation of target proteins.

The protein resides in the nucleus. Its subcellular location is the cytoplasm. It localises to the secreted. Participates in various redox reactions through the reversible oxidation of its active center dithiol to a disulfide and catalyzes dithiol-disulfide exchange reactions. Plays a role in the reversible S-nitrosylation of cysteine residues in target proteins, and thereby contributes to the response to intracellular nitric oxide. Nitrosylates the active site Cys of CASP3 in response to nitric oxide (NO), and thereby inhibits caspase-3 activity. Induces the FOS/JUN AP-1 DNA binding activity in ionizing radiation (IR) cells through its oxidation/reduction status and stimulates AP-1 transcriptional activity. In Ovis aries (Sheep), this protein is Thioredoxin (TXN).